The sequence spans 147 residues: MVHLSAEEKGLVTGLWGKVNVDDVGAEALGRLLVVYPWTQRFFDSFGDLSSAGAIMGNPKVKAHGKKVANSISDGIKNLDNLKGTYAKLSELHCDKLHVDPENFRLLGNVLVCVMARTLGKEFTPHAQAAFQKMVLGVATALAHKYH.

N-acetylvaline is present on valine 2. The region spanning 3-147 is the Globin domain; it reads HLSAEEKGLV…VATALAHKYH (145 aa). Threonine 13 is modified (phosphothreonine). Position 45 is a phosphoserine (serine 45). At lysine 60 the chain carries N6-acetyllysine. Heme b is bound at residue histidine 64. Lysine 83 is modified (N6-acetyllysine). Histidine 93 provides a ligand contact to heme b. Cysteine 94 is subject to S-nitrosocysteine. Residue lysine 145 is modified to N6-acetyllysine.

It belongs to the globin family. In terms of assembly, heterotetramer of two alpha chains and two beta chains. In terms of tissue distribution, red blood cells.

In terms of biological role, involved in oxygen transport from the lung to the various peripheral tissues. The protein is Hemoglobin subunit beta (HBB) of Scapanus orarius (Coast mole).